Here is a 366-residue protein sequence, read N- to C-terminus: Glucose 1-dehydrogenase 2 (366 aa).

Zn(2+) is bound at residue C39. S41 lines the substrate pocket. Residues H66 and E67 each coordinate Zn(2+). 4 residues coordinate substrate: N90, E116, Q152, and D156. Q152 is a binding site for Zn(2+). NADP(+) is bound by residues 212–214 (NRR), 277–279 (FGF), 305–307 (LIN), and K354. Residue N307 participates in substrate binding.

The protein belongs to the zinc-containing alcohol dehydrogenase family. Glucose 1-dehydrogenase subfamily. It depends on Zn(2+) as a cofactor.

It catalyses the reaction D-glucose + NAD(+) = D-glucono-1,5-lactone + NADH + H(+). The enzyme catalyses D-glucose + NADP(+) = D-glucono-1,5-lactone + NADPH + H(+). Its function is as follows. Catalyzes the NAD(P)(+)-dependent oxidation of D-glucose to D-gluconate via gluconolactone. Can utilize both NAD(+) and NADP(+) as electron acceptor. Is involved in the degradation of glucose through a non-phosphorylative variant of the Entner-Doudoroff pathway. In Caldivirga maquilingensis (strain ATCC 700844 / DSM 13496 / JCM 10307 / IC-167), this protein is Glucose 1-dehydrogenase 2.